Here is a 211-residue protein sequence, read N- to C-terminus: Protein-L-isoaspartate O-methyltransferase (211 aa).

The active site involves Ser60.

It belongs to the methyltransferase superfamily. L-isoaspartyl/D-aspartyl protein methyltransferase family.

It localises to the cytoplasm. The catalysed reaction is [protein]-L-isoaspartate + S-adenosyl-L-methionine = [protein]-L-isoaspartate alpha-methyl ester + S-adenosyl-L-homocysteine. Functionally, catalyzes the methyl esterification of L-isoaspartyl residues in peptides and proteins that result from spontaneous decomposition of normal L-aspartyl and L-asparaginyl residues. It plays a role in the repair and/or degradation of damaged proteins. The chain is Protein-L-isoaspartate O-methyltransferase from Alteromonas mediterranea (strain DSM 17117 / CIP 110805 / LMG 28347 / Deep ecotype).